We begin with the raw amino-acid sequence, 38 residues long: Photosystem I reaction center subunit IX (38 aa).

A helical membrane pass occupies residues 4 to 24; it reads FLTAAPVVAAIWFTATAGILI.

The protein belongs to the PsaJ family.

The protein resides in the cellular thylakoid membrane. In terms of biological role, may help in the organization of the PsaE and PsaF subunits. The polypeptide is Photosystem I reaction center subunit IX (Synechococcus sp. (strain CC9605)).